We begin with the raw amino-acid sequence, 202 residues long: FMN-dependent NADH:quinone oxidoreductase 2 (202 aa).

FMN is bound by residues Ser9, 15–17 (SVS), 93–96 (MYNF), and 137–140 (SRGG).

It belongs to the azoreductase type 1 family. In terms of assembly, homodimer. It depends on FMN as a cofactor.

The catalysed reaction is 2 a quinone + NADH + H(+) = 2 a 1,4-benzosemiquinone + NAD(+). It carries out the reaction N,N-dimethyl-1,4-phenylenediamine + anthranilate + 2 NAD(+) = 2-(4-dimethylaminophenyl)diazenylbenzoate + 2 NADH + 2 H(+). Quinone reductase that provides resistance to thiol-specific stress caused by electrophilic quinones. Its function is as follows. Also exhibits azoreductase activity. Catalyzes the reductive cleavage of the azo bond in aromatic azo compounds to the corresponding amines. The protein is FMN-dependent NADH:quinone oxidoreductase 2 of Bradyrhizobium diazoefficiens (strain JCM 10833 / BCRC 13528 / IAM 13628 / NBRC 14792 / USDA 110).